A 122-amino-acid polypeptide reads, in one-letter code: Large ribosomal subunit protein uL18 (122 aa).

It belongs to the universal ribosomal protein uL18 family. As to quaternary structure, part of the 50S ribosomal subunit; part of the 5S rRNA/L5/L18/L25 subcomplex. Contacts the 5S and 23S rRNAs.

Its function is as follows. This is one of the proteins that bind and probably mediate the attachment of the 5S RNA into the large ribosomal subunit, where it forms part of the central protuberance. The polypeptide is Large ribosomal subunit protein uL18 (Mycobacterium ulcerans (strain Agy99)).